The sequence spans 368 residues: Cell division protein FtsZ 1 (368 aa).

GTP-binding positions include 52–56 (GGGCN), 139–141 (GTG), glutamate 170, arginine 174, and aspartate 217.

Belongs to the FtsZ family. In terms of assembly, homodimer. Polymerizes to form a dynamic ring structure in a strictly GTP-dependent manner. Interacts directly with several other division proteins.

The protein localises to the cytoplasm. Essential cell division protein that forms a contractile ring structure (Z ring) at the future cell division site. The regulation of the ring assembly controls the timing and the location of cell division. One of the functions of the FtsZ ring is to recruit other cell division proteins to the septum to produce a new cell wall between the dividing cells. Binds GTP and shows GTPase activity. This Archaeoglobus fulgidus (strain ATCC 49558 / DSM 4304 / JCM 9628 / NBRC 100126 / VC-16) protein is Cell division protein FtsZ 1.